The sequence spans 89 residues: Small ribosomal subunit protein uS15 (89 aa).

It belongs to the universal ribosomal protein uS15 family. In terms of assembly, part of the 30S ribosomal subunit. Forms a bridge to the 50S subunit in the 70S ribosome, contacting the 23S rRNA.

In terms of biological role, one of the primary rRNA binding proteins, it binds directly to 16S rRNA where it helps nucleate assembly of the platform of the 30S subunit by binding and bridging several RNA helices of the 16S rRNA. Its function is as follows. Forms an intersubunit bridge (bridge B4) with the 23S rRNA of the 50S subunit in the ribosome. This Bacillus licheniformis (strain ATCC 14580 / DSM 13 / JCM 2505 / CCUG 7422 / NBRC 12200 / NCIMB 9375 / NCTC 10341 / NRRL NRS-1264 / Gibson 46) protein is Small ribosomal subunit protein uS15.